The following is a 343-amino-acid chain: Probable magnesium transporter NIPA4 (343 aa).

The Extracellular segment spans residues 1-18 (MAESSGSWRDSYKGMSSD). The chain crosses the membrane as a helical span at residues 19 to 39 (NIKGLVLALSSSLFIGASFIV). Residues 40 to 66 (KKKGLKKAASTGTRAGVGGYSYLYEPL) lie on the Cytoplasmic side of the membrane. A helical membrane pass occupies residues 67–87 (WWIGMTTMLLGEIANFAAYAF). The Extracellular portion of the chain corresponds to 88-90 (APA). Residues 91 to 111 (ILVTPLGAVSIIISAVLAHII) form a helical membrane-spanning segment. At 112–115 (LREK) the chain is on the cytoplasmic side. Residues 116-136 (LHIFGILGCALCVVGSTTIVL) traverse the membrane as a helical segment. The Extracellular segment spans residues 137 to 157 (HAPQEREIDSVIEVWNLATEP). The helical transmembrane segment at 158-178 (AFMFYASLVIGAAVFLIIRFV) threads the bilayer. The Cytoplasmic portion of the chain corresponds to 179–189 (PQYGQTNVMVY). A helical membrane pass occupies residues 190-210 (IGICSLVGSLSVMSVKALGIA). Over 211–220 (LKLTFSGTNQ) the chain is Extracellular. The chain crosses the membrane as a helical span at residues 221–241 (LFYPQTWIFTLVVLTCVVTQL). At 242–254 (NYLNKALDTFNTA) the chain is on the cytoplasmic side. Residues 255–275 (IVSPIYYVMFTSLTILASVIM) traverse the membrane as a helical segment. At 276–283 (FKDWDRQN) the chain is on the extracellular side. The chain crosses the membrane as a helical span at residues 284–304 (GTQIVTEICGFVTILSGTFLL). The Cytoplasmic portion of the chain corresponds to 305–343 (HRTKDMVEGSSVILPLRISKHINEEEGIPLRRQESLRSP).

This sequence belongs to the NIPA (TC 2.A.7) family. In terms of assembly, homodimer.

It is found in the cell membrane. It localises to the early endosome. In terms of biological role, acts as a Mg(2+) transporter. Can also transport other divalent cations such as Fe(2+), Sr(2+), Ba(2+), Mn(2+) and Co(2+) but to a much less extent than Mg(2+). This Arabidopsis thaliana (Mouse-ear cress) protein is Probable magnesium transporter NIPA4.